The chain runs to 106 residues: 1-deoxy-D-xylulose 5-phosphate reductoisomerase (106 aa).

Aspartate 3 serves as a coordination point for Mn(2+). 8 residues coordinate 1-deoxy-D-xylulose 5-phosphate: serine 4, glutamate 5, serine 29, histidine 52, serine 65, asparagine 70, lysine 71, and glutamate 74. Glutamate 5 serves as a coordination point for Mn(2+). Glutamate 74 contributes to the Mn(2+) binding site.

It belongs to the DXR family. Mn(2+) serves as cofactor. Requires Mg(2+) as cofactor.

It localises to the plastid. It is found in the chloroplast stroma. The catalysed reaction is 2-C-methyl-D-erythritol 4-phosphate + NADP(+) = 1-deoxy-D-xylulose 5-phosphate + NADPH + H(+). It functions in the pathway isoprenoid biosynthesis; isopentenyl diphosphate biosynthesis via DXP pathway; isopentenyl diphosphate from 1-deoxy-D-xylulose 5-phosphate: step 1/6. In terms of biological role, enzyme of the plastid non-mevalonate pathway for isoprenoid biosynthesis that catalyzes the NADPH-dependent rearrangement and reduction of 1-deoxy-D-xylulose-5-phosphate (DXP) to 2-C-methyl-D-erythritol 4-phosphate (MEP). Required for chloroplast development. In Origanum vulgare (Wild marjoram), this protein is 1-deoxy-D-xylulose 5-phosphate reductoisomerase.